Consider the following 467-residue polypeptide: Ribulose bisphosphate carboxylase large chain (467 aa).

Lys5 is modified (N6,N6,N6-trimethyllysine). 2 residues coordinate substrate: Asn114 and Thr164. Lys166 functions as the Proton acceptor in the catalytic mechanism. Lys168 lines the substrate pocket. Mg(2+) contacts are provided by Lys192, Asp194, and Glu195. At Lys192 the chain carries N6-carboxylysine. The Proton acceptor role is filled by His285. Substrate-binding residues include Arg286, His318, and Ser370.

Belongs to the RuBisCO large chain family. Type I subfamily. Heterohexadecamer of 8 large chains and 8 small chains; disulfide-linked. The disulfide link is formed within the large subunit homodimers. Mg(2+) serves as cofactor. Post-translationally, the disulfide bond which can form in the large chain dimeric partners within the hexadecamer appears to be associated with oxidative stress and protein turnover.

The protein resides in the plastid. It is found in the chloroplast. The enzyme catalyses 2 (2R)-3-phosphoglycerate + 2 H(+) = D-ribulose 1,5-bisphosphate + CO2 + H2O. The catalysed reaction is D-ribulose 1,5-bisphosphate + O2 = 2-phosphoglycolate + (2R)-3-phosphoglycerate + 2 H(+). Its function is as follows. RuBisCO catalyzes two reactions: the carboxylation of D-ribulose 1,5-bisphosphate, the primary event in carbon dioxide fixation, as well as the oxidative fragmentation of the pentose substrate in the photorespiration process. Both reactions occur simultaneously and in competition at the same active site. This Hydrophyllum virginianum (Eastern waterleaf) protein is Ribulose bisphosphate carboxylase large chain.